Consider the following 155-residue polypeptide: MSEAKSGPEYASFFAVMGASAAMVFSALGAAYGTAKSGTGIAAMSVMRPEMIMKSIIPVVMAGIIAIYGLVVAVLIANSLNDGISLYRSFLQLGAGLSVGLSGLAAGFAIGIVGDAGVRGTAQQPRLFVGMILILIFAEVLGLYGLIVALILSTK.

The Lumenal segment spans residues 1 to 10 (MSEAKSGPEY). A helical membrane pass occupies residues 11–33 (ASFFAVMGASAAMVFSALGAAYG). Topologically, residues 34 to 55 (TAKSGTGIAAMSVMRPEMIMKS) are cytoplasmic. The chain crosses the membrane as a helical span at residues 56–76 (IIPVVMAGIIAIYGLVVAVLI). The Lumenal portion of the chain corresponds to 77-92 (ANSLNDGISLYRSFLQ). A helical transmembrane segment spans residues 93 to 114 (LGAGLSVGLSGLAAGFAIGIVG). Residues 115 to 131 (DAGVRGTAQQPRLFVGM) are Cytoplasmic-facing. The helical transmembrane segment at 132 to 152 (ILILIFAEVLGLYGLIVALIL) threads the bilayer. Residues 153–155 (STK) are Lumenal-facing.

Belongs to the V-ATPase proteolipid subunit family. As to quaternary structure, V-ATPase is a heteromultimeric enzyme made up of two complexes: the ATP-hydrolytic V1 complex and the proton translocation V0 complex. The V1 complex consists of three catalytic AB heterodimers that form a heterohexamer, three peripheral stalks each consisting of EG heterodimers, one central rotor including subunits D and F, and the regulatory subunits C and H. The proton translocation complex V0 consists of the proton transport subunit a, a ring of proteolipid subunits c9c'', rotary subunit d, subunits e and f, and the accessory subunits ATP6AP1/Ac45 and ATP6AP2/PRR. Interacts with the V0 complex V-ATPase subunit a4 ATP6V0A4. Interacts with LASS2. Interacts with RNF182; this interaction leads to ubiquitination and degradation via the proteasome pathway. Ubiquitinated by RNF182, leading to its degradation via the ubiquitin-proteasome pathway.

Its subcellular location is the cytoplasmic vesicle. The protein resides in the clathrin-coated vesicle membrane. It localises to the secretory vesicle. It is found in the synaptic vesicle membrane. Proton-conducting pore forming subunit of the V0 complex of vacuolar(H+)-ATPase (V-ATPase), a multisubunit enzyme composed of a peripheral complex (V1) that hydrolyzes ATP and a membrane integral complex (V0) that translocates protons. V-ATPase is responsible for acidifying and maintaining the pH of intracellular compartments and in some cell types, is targeted to the plasma membrane, where it is responsible for acidifying the extracellular environment. This Ovis aries (Sheep) protein is V-type proton ATPase 16 kDa proteolipid subunit c (ATP6V0C).